The primary structure comprises 57 residues: COP9 signalosome complex subunit 9 (57 aa).

This sequence belongs to the CSN9 family. In terms of assembly, component of the CSN complex, probably composed of cops1, cops2, cops3, cops4, cops5, cops6, cops7, cops8 and cops9.

The protein localises to the nucleus. The protein resides in the cytoplasm. Its subcellular location is the nucleoplasm. Component of the COP9 signalosome complex (CSN), a complex involved in various cellular and developmental processes. The CSN complex is an essential regulator of the ubiquitin (Ubl) conjugation pathway by mediating the deneddylation of the cullin subunits of SCF-type E3 ligase complexes, leading to decrease the Ubl ligase activity. May play a role in cell proliferation. In Xenopus laevis (African clawed frog), this protein is COP9 signalosome complex subunit 9.